The chain runs to 485 residues: Noelin (485 aa).

Residues 1–16 (MSVPLLKIGVVLSTMA) form the signal peptide. 8 N-linked (GlcNAc...) asparagine glycosylation sites follow: N33, N103, N187, N288, N307, N394, N431, and N473. Residues 87-225 (RDARTKQLRQ…ERLRACMQKL (139 aa)) adopt a coiled-coil conformation. Residues 226–478 (ACGKLTGISD…QILYNVTLFH (253 aa)) form the Olfactomedin-like domain. C227 and C409 are disulfide-bonded.

As to quaternary structure, homotetramer; disulfide-linked. Dimer of dimers, giving rise to a V-shaped homotretramer. Isoform 1 and isoform 3 interact with RTN4R. Identified in a complex with RTN4R and LINGO1. Peripherally associated with AMPAR complex. AMPAR complex consists of an inner core made of 4 pore-forming GluA/GRIA proteins (GRIA1, GRIA2, GRIA3 and GRIA4) and 4 major auxiliary subunits arranged in a twofold symmetry. One of the two pairs of distinct binding sites is occupied either by CNIH2, CNIH3 or CACNG2, CACNG3. The other harbors CACNG2, CACNG3, CACNG4, CACNG8 or GSG1L. This inner core of AMPAR complex is complemented by outer core constituents binding directly to the GluA/GRIA proteins at sites distinct from the interaction sites of the inner core constituents. Outer core constituents include at least PRRT1, PRRT2, CKAMP44/SHISA9, FRRS1L and NRN1. The proteins of the inner and outer core serve as a platform for other, more peripherally associated AMPAR constituents, including OLFM1. Alone or in combination, these auxiliary subunits control the gating and pharmacology of the AMPAR complex and profoundly impact their biogenesis and protein processing. Interacts with OLFM2.

The protein resides in the secreted. It localises to the synapse. It is found in the endoplasmic reticulum. Its subcellular location is the cell projection. The protein localises to the axon. The protein resides in the perikaryon. Contributes to the regulation of axonal growth in the embryonic and adult central nervous system by inhibiting interactions between RTN4R and LINGO1. Inhibits RTN4R-mediated axon growth cone collapse. May play an important role in regulating the production of neural crest cells by the neural tube. May be required for normal responses to olfactory stimuli. The chain is Noelin (OLFM1) from Homo sapiens (Human).